Reading from the N-terminus, the 421-residue chain is MDKLIITGGNRLDGEIRISGAKNSALPILAATLLADTPVTVCNLPHLHDITTMIELFGRMGVQPIIDEKLNVEVDASSIKTLVAPYELVKTMRASILVLGPMLARFGEAEVALPGGCAIGSRPVDLHIRGLEAMGAQIEVEGGYIKAKAPVGGLHGGQFFFDTVSVTGTENLMMAAALANGRTVLQNAAREPEVVDLANCLNAMGANVQGAGSDTIVIDGVKRLGGARYDVLPDRIETGTYLVAAAATGGRVKLKDTDPTILEAVLQKLEEAGAHINTGNNWIELDMKGNRPKAVNIRTAPYPAFPTDMQAQFISMNAVAEGTGAVIETVFENRFMHVYEMNRMGAQILVEGNTAIVTGVPRLKGAPVMATDLRASASLVIAGLVAEGDTLIDRIYHIDRGYECIEEKLQLLGAKIRRVPG.

A phosphoenolpyruvate-binding site is contributed by 22–23; that stretch reads KN. Arginine 93 contributes to the UDP-N-acetyl-alpha-D-glucosamine binding site. Catalysis depends on cysteine 117, which acts as the Proton donor. Cysteine 117 bears the 2-(S-cysteinyl)pyruvic acid O-phosphothioketal mark. UDP-N-acetyl-alpha-D-glucosamine-binding positions include 122-126, aspartate 308, and valine 330; that span reads RPVDL.

The protein belongs to the EPSP synthase family. MurA subfamily.

It is found in the cytoplasm. The enzyme catalyses phosphoenolpyruvate + UDP-N-acetyl-alpha-D-glucosamine = UDP-N-acetyl-3-O-(1-carboxyvinyl)-alpha-D-glucosamine + phosphate. Its pathway is cell wall biogenesis; peptidoglycan biosynthesis. Cell wall formation. Adds enolpyruvyl to UDP-N-acetylglucosamine. The chain is UDP-N-acetylglucosamine 1-carboxyvinyltransferase from Pseudomonas paraeruginosa (strain DSM 24068 / PA7) (Pseudomonas aeruginosa (strain PA7)).